Consider the following 152-residue polypeptide: ESAT-6 secretion machinery protein EssA (152 aa).

Over 1–114 (MLMNSVIALT…PYIQNKQEKK (114 aa)) the chain is Cytoplasmic. A disordered region spans residues 62–83 (ERQQQIKNDMFQNQASHSTRLN). Residues 66–80 (QIKNDMFQNQASHST) are compositionally biased toward polar residues. The chain crosses the membrane as a helical span at residues 115 to 135 (IFPYILMSVGAFLTLGFVIFS). Residues 136–152 (IHKGRRTKNESARKSNI) lie on the Extracellular side of the membrane.

The protein belongs to the EssA family.

It is found in the cell membrane. In terms of biological role, component of the ESAT-6 secretion system (Ess). Required for the secretion of EsxA and EsxB. The polypeptide is ESAT-6 secretion machinery protein EssA (Staphylococcus aureus (strain COL)).